The chain runs to 293 residues: Ribokinase (293 aa).

Substrate contacts are provided by residues 11-13 (SMD), 39-43 (GKGAN), and glutamate 139. Residues asparagine 183 and 210–215 (TEGKQG) contribute to the ATP site. K(+) contacts are provided by aspartate 236 and threonine 238. ATP is bound by residues 241–242 (GD) and asparagine 266. Aspartate 242 is a substrate binding site. Aspartate 242 acts as the Proton acceptor in catalysis. 3 residues coordinate K(+): serine 272, serine 275, and glycine 277.

This sequence belongs to the carbohydrate kinase PfkB family. Ribokinase subfamily. Homodimer. The cofactor is Mg(2+).

The protein resides in the cytoplasm. The enzyme catalyses D-ribose + ATP = D-ribose 5-phosphate + ADP + H(+). Its pathway is carbohydrate metabolism; D-ribose degradation; D-ribose 5-phosphate from beta-D-ribopyranose: step 2/2. Its activity is regulated as follows. Activated by a monovalent cation that binds near, but not in, the active site. The most likely occupant of the site in vivo is potassium. Ion binding induces a conformational change that may alter substrate affinity. Functionally, catalyzes the phosphorylation of ribose at O-5 in a reaction requiring ATP and magnesium. The resulting D-ribose-5-phosphate can then be used either for sythesis of nucleotides, histidine, and tryptophan, or as a component of the pentose phosphate pathway. This chain is Ribokinase, found in Bacillus subtilis (strain 168).